The primary structure comprises 195 residues: Recombination protein RecR (195 aa).

A C4-type zinc finger spans residues 53 to 68; the sequence is CTICHNLDTISPCSIC. The 96-residue stretch at 76 to 171 folds into the Toprim domain; sequence SIICVVEELG…KVTRLACGIP (96 aa).

This sequence belongs to the RecR family.

In terms of biological role, may play a role in DNA repair. It seems to be involved in an RecBC-independent recombinational process of DNA repair. It may act with RecF and RecO. The chain is Recombination protein RecR from Anaplasma marginale (strain St. Maries).